The sequence spans 833 residues: Translation initiation factor IF-2 (833 aa).

Residues 1–247 (MTEDVKKADG…ALQQAFTKPA (247 aa)) form a disordered region. Composition is skewed to basic and acidic residues over residues 53-99 (QKAE…EAKK) and 110-152 (VDVE…RYAE). Residues 153-166 (LSEEDAENENSEDY) are compositionally biased toward acidic residues. Positions 187 to 203 (KENRNRGGKNKVAKAKK) are enriched in basic residues. The span at 204 to 227 (GGREDESSKTERESNRRNQKDGKM) shows a compositional bias: basic and acidic residues. One can recognise a tr-type G domain in the interval 333–502 (TRAPVVTIMG…LLQSEVLELT (170 aa)). The tract at residues 342-349 (GHVDHGKT) is G1. Position 342-349 (342-349 (GHVDHGKT)) interacts with GTP. Residues 367 to 371 (GITQH) are G2. The interval 388-391 (DTPG) is G3. Residues 388 to 392 (DTPGH) and 442 to 445 (NKID) contribute to the GTP site. The G4 stretch occupies residues 442-445 (NKID). The tract at residues 478-480 (SAK) is G5.

This sequence belongs to the TRAFAC class translation factor GTPase superfamily. Classic translation factor GTPase family. IF-2 subfamily.

It localises to the cytoplasm. Its function is as follows. One of the essential components for the initiation of protein synthesis. Protects formylmethionyl-tRNA from spontaneous hydrolysis and promotes its binding to the 30S ribosomal subunits. Also involved in the hydrolysis of GTP during the formation of the 70S ribosomal complex. The protein is Translation initiation factor IF-2 (infB) of Pasteurella multocida (strain Pm70).